Here is a 42-residue protein sequence, read N- to C-terminus: Photosystem I reaction center subunit IX (42 aa).

The chain crosses the membrane as a helical span at residues 7-27; the sequence is YLSVAPVLSTLWFGALAGLLI.

The protein belongs to the PsaJ family.

It is found in the plastid. Its subcellular location is the chloroplast thylakoid membrane. Its function is as follows. May help in the organization of the PsaE and PsaF subunits. The chain is Photosystem I reaction center subunit IX from Agrostis stolonifera (Creeping bentgrass).